A 457-amino-acid chain; its full sequence is Argininosuccinate lyase (457 aa).

This sequence belongs to the lyase 1 family. Argininosuccinate lyase subfamily.

It is found in the cytoplasm. It carries out the reaction 2-(N(omega)-L-arginino)succinate = fumarate + L-arginine. The protein operates within amino-acid biosynthesis; L-arginine biosynthesis; L-arginine from L-ornithine and carbamoyl phosphate: step 3/3. The sequence is that of Argininosuccinate lyase from Escherichia coli O139:H28 (strain E24377A / ETEC).